Reading from the N-terminus, the 802-residue chain is Potassium channel AKT2/3 (802 aa).

At 1-79 the chain is on the cytoplasmic side; it reads MDLKYSASHC…PMDSRYRCWE (79 aa). A helical membrane pass occupies residues 80–100; that stretch reads FYMVLLVAYSAWVYPFEVAFL. Residues 101–109 are Extracellular-facing; that stretch reads NSSPKRNLC. The chain crosses the membrane as a helical span at residues 110–130; it reads IADNIVDLFFAVDIVLTFFVA. Residues 131–153 lie on the Cytoplasmic side of the membrane; the sequence is YIDERTQLLVREPKQIAVRYLST. The helical transmembrane segment at 154–174 threads the bilayer; it reads WFLMDVASTIPFDAIGYLITG. The Extracellular portion of the chain corresponds to 175-183; the sequence is TSTLNITCN. Residue Asn179 is glycosylated (N-linked (GlcNAc...) asparagine). Residues 184-204 traverse the membrane as a helical; Voltage-sensor segment; it reads LLGLLRFWRLRRVKHLFTRLE. At 205-218 the chain is on the cytoplasmic side; sequence KDIRYSYFWIRCFR. Residues 219–239 traverse the membrane as a helical segment; it reads LLSVTLFLVHCAGCSYYLIAD. Residues 240 to 265 are Extracellular-facing; sequence RYPHQGKTWTDAIPNFTETSLSIRYI. Asn254 carries an N-linked (GlcNAc...) asparagine glycan. Residues 266–285 constitute an intramembrane region (pore-forming); the sequence is AAIYWSITTMTTVGYGDLHA. Over 286–288 the chain is Extracellular; sequence SNT. Residues 289 to 309 form a helical membrane-spanning segment; sequence IEMVFITVYMLFNLGLTAYLI. The Cytoplasmic portion of the chain corresponds to 310-802; sequence GNMTNLVVEG…KLYFVVNKII (493 aa). 394–513 provides a ligand contact to a nucleoside 3',5'-cyclic phosphate; sequence LFKGVSREIL…ATMLKNFLQH (120 aa). ANK repeat units follow at residues 540–569, 573–602, 606–636, 637–666, and 670–699; these read NIAS…SPDI, KGKT…NIHI, NGNS…SDPH, IAGD…NVDT, and HGVT…DVVC. Positions 725 to 802 constitute a KHA domain; the sequence is RVSIYRGHPL…KLYFVVNKII (78 aa).

This sequence belongs to the potassium channel family. Plant (TC 1.A.1.4) subfamily. In terms of assembly, the potassium channel is probably composed of a homo- or heterotetrameric complex of pore-forming subunits. Interacts with the phosphatase PPC2A and the kinase CIPK6. May interact with AKT1, KAT1 and KAT3. Interacts with SLAC1. Post-translationally, dephosphorylated by PP2CA. Expressed mainly in the phloem tissues throughout the plant but also, at a lower level, in leaf epiderm, mesophyll and guard cells.

Its subcellular location is the endoplasmic reticulum membrane. Functionally, highly selective and weak inward-rectifying potassium channel. Plays a role in both loading and unloading potassium into/from the phloem sap. Seems to control sugar loading into phloem via a voltage-dependent process. Blocked by physiological concentrations of external calcium and by external acidification. May interact with the cytoskeleton or with regulatory proteins. Dephosphorylation by PP2CA not only leads to the inhibition of potassium currents but also to an increase of the voltage-dependence of the channel. Regulated by the CBL4/CIPK6 calcium sensor/protein kinase complex via a kinase interaction-dependent but phosphorylation-independent translocation of the channel to the plasma membrane. In Arabidopsis thaliana (Mouse-ear cress), this protein is Potassium channel AKT2/3 (AKT2).